A 432-amino-acid chain; its full sequence is Enolase (432 aa).

Q167 is a binding site for (2R)-2-phosphoglycerate. The Proton donor role is filled by E209. 3 residues coordinate Mg(2+): D246, E291, and D318. (2R)-2-phosphoglycerate-binding residues include K343, R372, S373, and K394. The active-site Proton acceptor is K343.

This sequence belongs to the enolase family. As to quaternary structure, component of the RNA degradosome, a multiprotein complex involved in RNA processing and mRNA degradation. The cofactor is Mg(2+).

The protein localises to the cytoplasm. The protein resides in the secreted. Its subcellular location is the cell surface. The enzyme catalyses (2R)-2-phosphoglycerate = phosphoenolpyruvate + H2O. The protein operates within carbohydrate degradation; glycolysis; pyruvate from D-glyceraldehyde 3-phosphate: step 4/5. Its function is as follows. Catalyzes the reversible conversion of 2-phosphoglycerate (2-PG) into phosphoenolpyruvate (PEP). It is essential for the degradation of carbohydrates via glycolysis. The sequence is that of Enolase from Colwellia psychrerythraea (strain 34H / ATCC BAA-681) (Vibrio psychroerythus).